Consider the following 145-residue polypeptide: D-aminoacyl-tRNA deacylase (145 aa).

The short motif at 137–138 is the Gly-cisPro motif, important for rejection of L-amino acids element; that stretch reads GP.

It belongs to the DTD family. As to quaternary structure, homodimer.

The protein localises to the cytoplasm. It catalyses the reaction glycyl-tRNA(Ala) + H2O = tRNA(Ala) + glycine + H(+). The catalysed reaction is a D-aminoacyl-tRNA + H2O = a tRNA + a D-alpha-amino acid + H(+). An aminoacyl-tRNA editing enzyme that deacylates mischarged D-aminoacyl-tRNAs. Also deacylates mischarged glycyl-tRNA(Ala), protecting cells against glycine mischarging by AlaRS. Acts via tRNA-based rather than protein-based catalysis; rejects L-amino acids rather than detecting D-amino acids in the active site. By recycling D-aminoacyl-tRNA to D-amino acids and free tRNA molecules, this enzyme counteracts the toxicity associated with the formation of D-aminoacyl-tRNA entities in vivo and helps enforce protein L-homochirality. This is D-aminoacyl-tRNA deacylase from Pseudomonas fluorescens (strain ATCC BAA-477 / NRRL B-23932 / Pf-5).